A 396-amino-acid polypeptide reads, in one-letter code: NASP-related protein sim3 (396 aa).

The interval 1-31 is disordered; the sequence is MSSDTKTLENSKGNSATDADTKNPSSSDSRA. 2 TPR repeats span residues 32–65 and 89–122; these read IEQLVTQGNMAYAQKNYEEAVDKYGQALMQSESI and IENSQVLGNALGAKESVSQATESFEEPEAIGSFT. The segment at 135 to 164 is disordered; that stretch reads NEENSSIAHPEKESEEKETNEASPASEEDE. Residues 143–154 show a composition bias toward basic and acidic residues; it reads HPEKESEEKETN. The TPR 3 repeat unit spans residues 199 to 232; that stretch reads ADIYDLLGELSLEIENFSQASQDLKTALEWKEKV. Residues 267 to 329 adopt a coiled-coil conformation; it reads CEHVEKAAEI…QKTLDLKHGA (63 aa). Residues 284–301 show a composition bias toward basic and acidic residues; sequence RENEVTDKKGKGKQKAEE. Disordered regions lie at residues 284–307 and 334–396; these read RENEVTDKKGKGKQKAEESTLTSD and EAVM…KKKD. Residues 343 to 353 are compositionally biased toward low complexity; the sequence is SSLLSKDSSSL.

This sequence belongs to the NASP family. As to quaternary structure, interacts with cnp1, hht1, hht2 and hht3; has a preference for CENP-A (cnp1) over histone H3 (hht1/2/3).

Its subcellular location is the nucleus. Histone H3 and H3-like CENP-A-specific chaperone. Promotes delivery and incorporation of CENP-A in centromeric chromatin, probably by escorting nascent CENP-A to CENP-A chromatin assembly factors. Required for central core silencing and normal chromosome segregation. This is NASP-related protein sim3 (sim3) from Schizosaccharomyces pombe (strain 972 / ATCC 24843) (Fission yeast).